An 876-amino-acid polypeptide reads, in one-letter code: DNA mismatch repair protein MutS (876 aa).

Glycine 626–serine 633 serves as a coordination point for ATP. Residues phenylalanine 829 to proline 856 form a disordered region. Positions alanine 832–proline 841 are enriched in pro residues.

It belongs to the DNA mismatch repair MutS family.

In terms of biological role, this protein is involved in the repair of mismatches in DNA. It is possible that it carries out the mismatch recognition step. This protein has a weak ATPase activity. The polypeptide is DNA mismatch repair protein MutS (Cereibacter sphaeroides (strain ATCC 17025 / ATH 2.4.3) (Rhodobacter sphaeroides)).